Reading from the N-terminus, the 177-residue chain is Nuclear export protein (177 aa).

2 short sequence motifs (nuclear export signal) span residues 91 to 100 (LWLPMKSLSL) and 117 to 127 (MKHQILTRLKL).

In terms of assembly, binds M1 protein. May interact with human nucleoporins and exportin XPO1/CRM1.

It is found in the virion. The protein localises to the host nucleus. Its function is as follows. Mediates the nuclear export of encapsidated genomic RNAs (ribonucleoproteins, RNPs). Acts as an adapter between viral RNPs complexes and the nuclear export machinery of the cell. Possesses no intrinsic RNA-binding activity, but includes a C-terminal M1-binding domain. This domain is believed to allow recognition of RNPs to which the M1 protein is bound. Because the M1 protein is not available in large quantities until the later stages of infection, such an indirect recognition mechanism probably ensures that genomic RNPs are not exported from the nucleus before sufficient quantities of viral mRNA and progeny genomic RNA have been synthesized. Furthermore, the RNPs enters the cytoplasm only when they have associated with the M1 protein that is necessary to guide them to the plasma membrane. May down-regulate viral RNA synthesis when overproduced. The protein is Nuclear export protein (NS) of Homo sapiens (Human).